The following is a 235-amino-acid chain: Carboxy-S-adenosyl-L-methionine synthase (235 aa).

Residues Tyr35, 60–62 (GCS), 84–85 (DN), 110–111 (DI), Asn125, and Arg192 contribute to the S-adenosyl-L-methionine site.

This sequence belongs to the class I-like SAM-binding methyltransferase superfamily. Cx-SAM synthase family. In terms of assembly, homodimer.

It carries out the reaction prephenate + S-adenosyl-L-methionine = carboxy-S-adenosyl-L-methionine + 3-phenylpyruvate + H2O. In terms of biological role, catalyzes the conversion of S-adenosyl-L-methionine (SAM) to carboxy-S-adenosyl-L-methionine (Cx-SAM). The polypeptide is Carboxy-S-adenosyl-L-methionine synthase (Sulfurimonas denitrificans (strain ATCC 33889 / DSM 1251) (Thiomicrospira denitrificans (strain ATCC 33889 / DSM 1251))).